Consider the following 183-residue polypeptide: Putative manganese efflux pump MntP (183 aa).

6 helical membrane passes run 6–26, 40–60, 64–84, 101–121, 135–155, and 158–178; these read LFLIAIALSLDAFGVALCIGL, IYFGFFQFLFAIIGGYAGFLF, IATMPQIVGGVVICIVGIIMI, MNIILGISVSIDAMVVGFTAL, LFIGIVTLFVSILAFITSKYL, and IDVIGKYADYIGGIILIFFGL.

Belongs to the MntP (TC 9.B.29) family.

It is found in the cell membrane. In terms of biological role, probably functions as a manganese efflux pump. The polypeptide is Putative manganese efflux pump MntP (Clostridium tetani (strain Massachusetts / E88)).